The chain runs to 516 residues: 3-phosphoshikimate 1-carboxyvinyltransferase, chloroplastic (516 aa).

Residues 1–72 constitute a chloroplast transit peptide; it reads MAQSSRICHG…KVTASVSTSE (72 aa). 3-phosphoshikimate contacts are provided by Lys95, Ser96, and Arg100. A phosphoenolpyruvate-binding site is contributed by Lys95. Phosphoenolpyruvate contacts are provided by Gly173 and Arg203. Residues Ser250, Ser251, Gln252, Ser278, Asp403, and Lys430 each coordinate 3-phosphoshikimate. Gln252 provides a ligand contact to phosphoenolpyruvate. The active-site Proton acceptor is Asp403. Phosphoenolpyruvate contacts are provided by Arg434, Arg476, and Lys501.

The protein belongs to the EPSP synthase family.

It localises to the plastid. The protein resides in the chloroplast. It carries out the reaction 3-phosphoshikimate + phosphoenolpyruvate = 5-O-(1-carboxyvinyl)-3-phosphoshikimate + phosphate. The protein operates within metabolic intermediate biosynthesis; chorismate biosynthesis; chorismate from D-erythrose 4-phosphate and phosphoenolpyruvate: step 6/7. Catalyzes the transfer of the enolpyruvyl moiety of phosphoenolpyruvate (PEP) to the 5-hydroxyl of shikimate-3-phosphate (S3P) to produce enolpyruvyl shikimate-3-phosphate and inorganic phosphate. This Brassica napus (Rape) protein is 3-phosphoshikimate 1-carboxyvinyltransferase, chloroplastic.